The following is a 327-amino-acid chain: DNA-directed RNA polymerase subunit alpha (327 aa).

The segment at M1 to Q233 is alpha N-terminal domain (alpha-NTD). Residues I247–P327 are alpha C-terminal domain (alpha-CTD).

It belongs to the RNA polymerase alpha chain family. In terms of assembly, homodimer. The RNAP catalytic core consists of 2 alpha, 1 beta, 1 beta' and 1 omega subunit. When a sigma factor is associated with the core the holoenzyme is formed, which can initiate transcription.

The catalysed reaction is RNA(n) + a ribonucleoside 5'-triphosphate = RNA(n+1) + diphosphate. DNA-dependent RNA polymerase catalyzes the transcription of DNA into RNA using the four ribonucleoside triphosphates as substrates. This is DNA-directed RNA polymerase subunit alpha from Chromobacterium violaceum (strain ATCC 12472 / DSM 30191 / JCM 1249 / CCUG 213 / NBRC 12614 / NCIMB 9131 / NCTC 9757 / MK).